A 179-amino-acid polypeptide reads, in one-letter code: ATP synthase subunit delta (179 aa).

The protein belongs to the ATPase delta chain family. As to quaternary structure, F-type ATPases have 2 components, F(1) - the catalytic core - and F(0) - the membrane proton channel. F(1) has five subunits: alpha(3), beta(3), gamma(1), delta(1), epsilon(1). F(0) has three main subunits: a(1), b(2) and c(10-14). The alpha and beta chains form an alternating ring which encloses part of the gamma chain. F(1) is attached to F(0) by a central stalk formed by the gamma and epsilon chains, while a peripheral stalk is formed by the delta and b chains.

Its subcellular location is the cell membrane. Its function is as follows. F(1)F(0) ATP synthase produces ATP from ADP in the presence of a proton or sodium gradient. F-type ATPases consist of two structural domains, F(1) containing the extramembraneous catalytic core and F(0) containing the membrane proton channel, linked together by a central stalk and a peripheral stalk. During catalysis, ATP synthesis in the catalytic domain of F(1) is coupled via a rotary mechanism of the central stalk subunits to proton translocation. Functionally, this protein is part of the stalk that links CF(0) to CF(1). It either transmits conformational changes from CF(0) to CF(1) or is implicated in proton conduction. The polypeptide is ATP synthase subunit delta (Staphylococcus carnosus (strain TM300)).